The primary structure comprises 485 residues: ATP synthase subunit beta (485 aa).

158 to 165 serves as a coordination point for ATP; it reads GGAGVGKT.

The protein belongs to the ATPase alpha/beta chains family. F-type ATPases have 2 components, CF(1) - the catalytic core - and CF(0) - the membrane proton channel. CF(1) has five subunits: alpha(3), beta(3), gamma(1), delta(1), epsilon(1). CF(0) has four main subunits: a(1), b(1), b'(1) and c(9-12).

The protein localises to the cell inner membrane. The enzyme catalyses ATP + H2O + 4 H(+)(in) = ADP + phosphate + 5 H(+)(out). Produces ATP from ADP in the presence of a proton gradient across the membrane. The catalytic sites are hosted primarily by the beta subunits. The protein is ATP synthase subunit beta of Erythrobacter litoralis (strain HTCC2594).